A 1102-amino-acid polypeptide reads, in one-letter code: Probable DNA-directed RNA polymerase (1102 aa).

Catalysis depends on residues aspartate 734, lysine 804, and aspartate 980.

This sequence belongs to the phage and mitochondrial RNA polymerase family.

The protein localises to the mitochondrion. The enzyme catalyses RNA(n) + a ribonucleoside 5'-triphosphate = RNA(n+1) + diphosphate. Functionally, DNA-dependent RNA polymerase catalyzes the transcription of DNA into RNA using the four ribonucleoside triphosphates as substrates. The chain is Probable DNA-directed RNA polymerase from Agaricus bitorquis (Pavement mushroom).